The sequence spans 31 residues: Cyclotide cter-D (31 aa).

Positions 1–31 form a cross-link, cyclopeptide (Gly-Asn); the sequence is GIPCAESCVWIPCTVTALLGCSCKDKVCYLN. 3 disulfide bridges follow: Cys4–Cys21, Cys8–Cys23, and Cys13–Cys28.

Contains 3 disulfide bonds. Post-translationally, this is a cyclic peptide. As to expression, expressed in root, seed and nodule but not in flower, stem, shoot, leaf and pod.

Probably participates in a plant defense mechanism. The chain is Cyclotide cter-D from Clitoria ternatea (Butterfly pea).